Consider the following 391-residue polypeptide: Alkanesulfonate monooxygenase (391 aa).

Belongs to the SsuD family.

The catalysed reaction is an alkanesulfonate + FMNH2 + O2 = an aldehyde + FMN + sulfite + H2O + 2 H(+). Functionally, catalyzes the desulfonation of aliphatic sulfonates. The sequence is that of Alkanesulfonate monooxygenase from Methylorubrum extorquens (strain CM4 / NCIMB 13688) (Methylobacterium extorquens).